The following is a 596-amino-acid chain: A-type ATP synthase subunit A (596 aa).

241 to 248 is a binding site for ATP; that stretch reads GPFGSGKT.

It belongs to the ATPase alpha/beta chains family. Has multiple subunits with at least A(3), B(3), C, D, E, F, H, I and proteolipid K(x).

The protein localises to the cell membrane. It carries out the reaction ATP + H2O + 4 H(+)(in) = ADP + phosphate + 5 H(+)(out). Component of the A-type ATP synthase that produces ATP from ADP in the presence of a proton gradient across the membrane. The A chain is the catalytic subunit. The protein is A-type ATP synthase subunit A of Ignicoccus hospitalis (strain KIN4/I / DSM 18386 / JCM 14125).